Reading from the N-terminus, the 592-residue chain is Potassium-transporting ATPase potassium-binding subunit (592 aa).

A run of 10 helical transmembrane segments spans residues 7 to 27 (ILLG…GTYI), 60 to 80 (LKYA…VYAL), 132 to 152 (ALAV…IALI), 175 to 195 (LHVL…QGVI), 279 to 299 (LSNF…CFTF), 310 to 330 (WAVL…AMHF), 409 to 429 (GLYG…LMIG), 449 to 469 (IAIL…VMLA), 513 to 533 (VMLG…VLAI), and 556 to 576 (LFVT…YVPA).

Belongs to the KdpA family. The system is composed of three essential subunits: KdpA, KdpB and KdpC.

It localises to the cell inner membrane. Its function is as follows. Part of the high-affinity ATP-driven potassium transport (or Kdp) system, which catalyzes the hydrolysis of ATP coupled with the electrogenic transport of potassium into the cytoplasm. This subunit binds the periplasmic potassium ions and delivers the ions to the membrane domain of KdpB through an intramembrane tunnel. The polypeptide is Potassium-transporting ATPase potassium-binding subunit (Dechloromonas aromatica (strain RCB)).